Consider the following 630-residue polypeptide: Arginine--tRNA ligase (630 aa).

Residues 120 to 130 (ANPIHPLHIGH) carry the 'HIGH' region motif.

The protein belongs to the class-I aminoacyl-tRNA synthetase family.

It is found in the cytoplasm. It carries out the reaction tRNA(Arg) + L-arginine + ATP = L-arginyl-tRNA(Arg) + AMP + diphosphate. The polypeptide is Arginine--tRNA ligase (Pyrobaculum arsenaticum (strain DSM 13514 / JCM 11321 / PZ6)).